Consider the following 313-residue polypeptide: Probable myosin light chain kinase DDB_G0292624 (313 aa).

The Protein kinase domain occupies 6-264 (YELHKEIGKG…AKQALEHPWI (259 aa)). Residues 12-20 (IGKGAFSVV) and Lys-35 each bind ATP. Asp-125 (proton acceptor) is an active-site residue.

Belongs to the protein kinase superfamily. CAMK Ser/Thr protein kinase family. CaMK subfamily.

The catalysed reaction is L-seryl-[myosin light chain] + ATP = O-phospho-L-seryl-[myosin light chain] + ADP + H(+). It catalyses the reaction L-threonyl-[myosin light chain] + ATP = O-phospho-L-threonyl-[myosin light chain] + ADP + H(+). With respect to regulation, does not have a calmodulin-binding domain. May phosphorylate a specific serine in the N-terminus of a myosin light chain. This chain is Probable myosin light chain kinase DDB_G0292624, found in Dictyostelium discoideum (Social amoeba).